The primary structure comprises 545 residues: Chaperonin GroEL (545 aa).

Residues 31-34 (TLGP), 88-92 (DGTTT), Gly-415, 478-480 (NAA), and Asp-494 contribute to the ATP site.

It belongs to the chaperonin (HSP60) family. As to quaternary structure, forms a cylinder of 14 subunits composed of two heptameric rings stacked back-to-back. Interacts with the co-chaperonin GroES.

It is found in the cytoplasm. The enzyme catalyses ATP + H2O + a folded polypeptide = ADP + phosphate + an unfolded polypeptide.. Functionally, together with its co-chaperonin GroES, plays an essential role in assisting protein folding. The GroEL-GroES system forms a nano-cage that allows encapsulation of the non-native substrate proteins and provides a physical environment optimized to promote and accelerate protein folding. This chain is Chaperonin GroEL, found in Streptococcus pyogenes serotype M4 (strain MGAS10750).